A 522-amino-acid chain; its full sequence is Sensory neuron membrane protein 1 (522 aa).

The Cytoplasmic segment spans residues 1–11 (MQLAKPLKYAA). Residues 12 to 32 (ISGIVAFVGLMFGWVIFPAIL) form a helical membrane-spanning segment. Residues 33–458 (KSQLKKEMAL…SQLFIPKRVV (426 aa)) lie on the Extracellular side of the membrane. N-linked (GlcNAc...) asparagine glycosylation is found at asparagine 67, asparagine 105, and asparagine 229. 3 disulfide bridges follow: cysteine 268-cysteine 333, cysteine 297-cysteine 352, and cysteine 335-cysteine 341. Residue asparagine 440 is glycosylated (N-linked (GlcNAc...) asparagine). Residues 459–479 (SVVCWCMISFGSLGVIAAVIF) form a helical membrane-spanning segment. The Cytoplasmic segment spans residues 480–522 (HFKGDIMHLAVAGDNSVSKIKPENDENKEVGVMGQNQEPAKVM). The interval 500 to 522 (KPENDENKEVGVMGQNQEPAKVM) is disordered. Residues 513-522 (GQNQEPAKVM) show a composition bias toward polar residues.

The protein belongs to the CD36 family. Principal component of the olfactory cilia membrane. Detected in both male and female antennae but not present in leg, abdomen, thorax or head.

The protein resides in the cell membrane. Functionally, plays an olfactory role that is not restricted to pheromone sensitivity. This Bombyx mori (Silk moth) protein is Sensory neuron membrane protein 1.